The following is a 282-amino-acid chain: NADPH-dependent 7-cyano-7-deazaguanine reductase (282 aa).

Substrate is bound at residue 88 to 90 (IES). Residue 90-91 (SK) coordinates NADPH. The active-site Thioimide intermediate is Cys190. The active-site Proton donor is Asp197. 229–230 (HE) contributes to the substrate binding site. NADPH is bound at residue 258 to 259 (RG).

Belongs to the GTP cyclohydrolase I family. QueF type 2 subfamily. In terms of assembly, homodimer.

The protein resides in the cytoplasm. The catalysed reaction is 7-aminomethyl-7-carbaguanine + 2 NADP(+) = 7-cyano-7-deazaguanine + 2 NADPH + 3 H(+). It participates in tRNA modification; tRNA-queuosine biosynthesis. Functionally, catalyzes the NADPH-dependent reduction of 7-cyano-7-deazaguanine (preQ0) to 7-aminomethyl-7-deazaguanine (preQ1). In Escherichia coli O45:K1 (strain S88 / ExPEC), this protein is NADPH-dependent 7-cyano-7-deazaguanine reductase.